Consider the following 271-residue polypeptide: Troponin T, fast skeletal muscle (271 aa).

Positions 1–21 are enriched in acidic residues; it reads MSDEEVEHVEEEYEEEEEAQE. The disordered stretch occupies residues 1–74; sequence MSDEEVEHVE…EKVDFDDIQK (74 aa). Residue serine 2 is modified to N-acetylserine. A Phosphoserine modification is found at serine 2. Basic and acidic residues-rich tracts occupy residues 31–53 and 62–74; these read PEVHEEVHEVHEPEEVQEEEKPR and PEGEKVDFDDIQK. A Phosphoserine modification is found at serine 90. Residues 113–155 show a composition bias toward basic and acidic residues; sequence RAERAEQQRIRAEKERERQNRLAEEKARREEEDAKRRAEDDLK. A disordered region spans residues 113–194; it reads RAERAEQQRI…REMKKKVLAE (82 aa). Residues serine 161, serine 168, and serine 169 each carry the phosphoserine modification. Basic and acidic residues predominate over residues 183–194; it reads TAREMKKKVLAE. The residue at position 205 (serine 205) is a Phosphoserine. At tyrosine 221 the chain carries Phosphotyrosine. Residues 248-271 are disordered; that stretch reads IDQAQKHSKKAGTAPKGKVGGRWK.

This sequence belongs to the troponin T family.

Its function is as follows. Troponin T is the tropomyosin-binding subunit of troponin, the thin filament regulatory complex which confers calcium-sensitivity to striated muscle actomyosin ATPase activity. In Bos taurus (Bovine), this protein is Troponin T, fast skeletal muscle (Tnnt3).